The following is a 177-amino-acid chain: Ribonuclease clavin (177 aa).

The N-terminal stretch at 1–27 (MVAIKNLVLVALTAVTALAMPSPLEER) is a signal peptide. Intrachain disulfides connect cysteine 33/cysteine 175 and cysteine 103/cysteine 159. The active site involves histidine 77. A disordered region spans residues 98–117 (WGNSDCDRPPKHSKNGDGKN). Basic and acidic residues predominate over residues 102 to 117 (DCDRPPKHSKNGDGKN). The active-site Proton acceptor is the glutamate 123. Residue histidine 164 is the Proton donor of the active site.

The protein belongs to the ribonuclease U2 family.

It is found in the secreted. In terms of biological role, clavin has the same substrate specificity as alpha-sarcin. It is specific for purines in both single- and double-stranded RNA. Its toxic action on eukaryotic cells is the result of cleavage of a single phosphodiester bond in the 60S subunit of ribosomes. This is Ribonuclease clavin (cla) from Aspergillus clavatus (strain ATCC 1007 / CBS 513.65 / DSM 816 / NCTC 3887 / NRRL 1 / QM 1276 / 107).